A 50-amino-acid polypeptide reads, in one-letter code: Protein PsbN (50 aa).

A helical transmembrane segment spans residues 14 to 34 (IAVTILAILLALTGFGLWSAF).

This sequence belongs to the PsbN family.

The protein resides in the cellular thylakoid membrane. Its function is as follows. May play a role in photosystem I and II biogenesis. This chain is Protein PsbN, found in Prochlorococcus marinus (strain MIT 9215).